We begin with the raw amino-acid sequence, 179 residues long: Adenine phosphoribosyltransferase (179 aa).

It belongs to the purine/pyrimidine phosphoribosyltransferase family. Homodimer.

The protein localises to the cytoplasm. The catalysed reaction is AMP + diphosphate = 5-phospho-alpha-D-ribose 1-diphosphate + adenine. The protein operates within purine metabolism; AMP biosynthesis via salvage pathway; AMP from adenine: step 1/1. Its function is as follows. Catalyzes a salvage reaction resulting in the formation of AMP, that is energically less costly than de novo synthesis. The sequence is that of Adenine phosphoribosyltransferase from Bradyrhizobium sp. (strain BTAi1 / ATCC BAA-1182).